Reading from the N-terminus, the 160-residue chain is Suppressyn (160 aa).

An N-terminal signal peptide occupies residues 1 to 39 (MACIYPTTFYTSLPTKSLNMGISLTTILILSVAVLLSTA). The interval 137 to 160 (AKASKPTTPPENRPRHFHSFIQKL) is disordered.

Interacts (secreted) with SLC1A5; mainly at cell surface. As to expression, specifically expressed in placenta by extravillous trophoblasts and syncytiotrophoblasts (at protein level).

Its subcellular location is the secreted. Functionally, may play a role in trophoblasts syncytialization, the spontaneous fusion of their plasma membranes, an essential process in placental development. May negatively regulate cell-cell fusion by interacting with SLC1A5, the probable receptor on the cell surface of the fusogenic syncytin-1/ERVW-1. The polypeptide is Suppressyn (ERVH48-1) (Homo sapiens (Human)).